We begin with the raw amino-acid sequence, 204 residues long: Large ribosomal subunit protein uL4 (204 aa).

The segment at 49 to 76 (KTKGISDVSGTTAKPYGQKRTGRARQGS) is disordered.

Belongs to the universal ribosomal protein uL4 family. In terms of assembly, part of the 50S ribosomal subunit.

Functionally, one of the primary rRNA binding proteins, this protein initially binds near the 5'-end of the 23S rRNA. It is important during the early stages of 50S assembly. It makes multiple contacts with different domains of the 23S rRNA in the assembled 50S subunit and ribosome. Forms part of the polypeptide exit tunnel. This Wolbachia pipientis wMel protein is Large ribosomal subunit protein uL4.